We begin with the raw amino-acid sequence, 195 residues long: Probable GTP-binding protein EngB (195 aa).

One can recognise an EngB-type G domain in the interval 24–195 (ELPEIALAGR…EAWDAILEKL (172 aa)). Residues 32 to 39 (GRSNVGKS), 59 to 63 (GKTQL), 77 to 80 (DVPG), 144 to 147 (TKAD), and 176 to 178 (FSS) contribute to the GTP site. Residues S39 and T61 each coordinate Mg(2+).

The protein belongs to the TRAFAC class TrmE-Era-EngA-EngB-Septin-like GTPase superfamily. EngB GTPase family. The cofactor is Mg(2+).

Necessary for normal cell division and for the maintenance of normal septation. The polypeptide is Probable GTP-binding protein EngB (Streptococcus pneumoniae serotype 4 (strain ATCC BAA-334 / TIGR4)).